The chain runs to 267 residues: Chlorophyll a-b binding protein 3B, chloroplastic (267 aa).

A chloroplast-targeting transit peptide spans 1-34; that stretch reads MAASTMALSSSTFAGKAVKLSPSSSEISGNGRIT. The interval 19–52 is disordered; sequence KLSPSSSEISGNGRITMRKTAAKPKPASSGSPWX. The chain crosses the membrane as a helical span at residues 153–173; the sequence is LVHAQSILAIWACQVVLMGAV. 6 residues coordinate chlorophyll b: valine 154, serine 158, glutamine 166, glutamate 174, arginine 177, and leucine 183. The chlorophyll a site is built by lysine 214, glutamate 215, asparagine 218, arginine 220, glutamine 232, histidine 247, and alanine 256. Residues 221–241 traverse the membrane as a helical segment; the sequence is LAMFSMFGFFVQAIVTGKGPL. Phenylalanine 263 serves as a coordination point for chlorophyll b.

Belongs to the light-harvesting chlorophyll a/b-binding (LHC) protein family. As to quaternary structure, the LHC complex consists of chlorophyll a-b binding proteins. It depends on Binds at least 14 chlorophylls (8 Chl-a and 6 Chl-b) and carotenoids such as lutein and neoxanthin. as a cofactor. Post-translationally, photoregulated by reversible phosphorylation of its threonine residues.

The protein resides in the plastid. The protein localises to the chloroplast thylakoid membrane. The light-harvesting complex (LHC) functions as a light receptor, it captures and delivers excitation energy to photosystems with which it is closely associated. The polypeptide is Chlorophyll a-b binding protein 3B, chloroplastic (CAB3B) (Solanum lycopersicum (Tomato)).